The primary structure comprises 267 residues: Cell cycle checkpoint protein RAD1 homolog mrt-2 (267 aa).

The protein belongs to the Rad1 family. As to quaternary structure, probable component of the toroidal 9-1-1 (RAD9-RAD1-HUS1) complex, composed of hpr-9, mrt-2 and hus-1. Interacts with hus-1. Might associate with hpr-9.

The protein resides in the nucleus. The catalysed reaction is Exonucleolytic cleavage in the 3'- to 5'-direction to yield nucleoside 5'-phosphates.. May be a component of the 9-1-1 cell-cycle checkpoint response complex that plays a major role in DNA repair. Promotes DNA double strand break-induced cell cycle arrest and apoptosis, thereby playing a role in genome stability. Also required for telomere length maintenance and germline immortality. May possess 3'-&gt;5' double stranded DNA exonuclease activity. The polypeptide is Cell cycle checkpoint protein RAD1 homolog mrt-2 (Caenorhabditis elegans).